Here is a 237-residue protein sequence, read N- to C-terminus: Orotate phosphoribosyltransferase (237 aa).

Lysine 29 serves as a coordination point for 5-phospho-alpha-D-ribose 1-diphosphate. Orotate is bound at residue 37–38 (FF). 5-phospho-alpha-D-ribose 1-diphosphate contacts are provided by residues 79–80 (YK), arginine 105, lysine 106, lysine 109, histidine 111, and 130–138 (DDVMSAGTA). The orotate site is built by serine 134 and arginine 162.

Belongs to the purine/pyrimidine phosphoribosyltransferase family. PyrE subfamily. As to quaternary structure, homodimer. Requires Mg(2+) as cofactor.

The catalysed reaction is orotidine 5'-phosphate + diphosphate = orotate + 5-phospho-alpha-D-ribose 1-diphosphate. Its pathway is pyrimidine metabolism; UMP biosynthesis via de novo pathway; UMP from orotate: step 1/2. Functionally, catalyzes the transfer of a ribosyl phosphate group from 5-phosphoribose 1-diphosphate to orotate, leading to the formation of orotidine monophosphate (OMP). In Polaromonas naphthalenivorans (strain CJ2), this protein is Orotate phosphoribosyltransferase.